The sequence spans 215 residues: Urease accessory protein UreF (215 aa).

It belongs to the UreF family. In terms of assembly, ureD, UreF and UreG form a complex that acts as a GTP-hydrolysis-dependent molecular chaperone, activating the urease apoprotein by helping to assemble the nickel containing metallocenter of UreC. The UreE protein probably delivers the nickel.

The protein resides in the cytoplasm. Required for maturation of urease via the functional incorporation of the urease nickel metallocenter. The chain is Urease accessory protein UreF from Paracoccus denitrificans (strain Pd 1222).